Reading from the N-terminus, the 159-residue chain is Major allergen Mal d 1 (159 aa).

Belongs to the BetVI family.

This Malus domestica (Apple) protein is Major allergen Mal d 1.